We begin with the raw amino-acid sequence, 449 residues long: N-succinylarginine dihydrolase (449 aa).

Substrate is bound by residues 19-28 (GGLSYGNVAS), Asn110, and 137-138 (HR). The segment at 23–43 (YGNVASQSNSQQASNPREAAR) is disordered. Residues 27–37 (ASQSNSQQASN) are compositionally biased toward low complexity. Glu174 is an active-site residue. Arg214 serves as a coordination point for substrate. His250 is a catalytic residue. Residues Asp252 and Asn365 each contribute to the substrate site. The active-site Nucleophile is the Cys371.

Belongs to the succinylarginine dihydrolase family. As to quaternary structure, homodimer.

The catalysed reaction is N(2)-succinyl-L-arginine + 2 H2O + 2 H(+) = N(2)-succinyl-L-ornithine + 2 NH4(+) + CO2. It participates in amino-acid degradation; L-arginine degradation via AST pathway; L-glutamate and succinate from L-arginine: step 2/5. In terms of biological role, catalyzes the hydrolysis of N(2)-succinylarginine into N(2)-succinylornithine, ammonia and CO(2). In Pseudomonas putida (strain ATCC 700007 / DSM 6899 / JCM 31910 / BCRC 17059 / LMG 24140 / F1), this protein is N-succinylarginine dihydrolase.